A 159-amino-acid chain; its full sequence is Transcriptional repressor NrdR (159 aa).

A zinc finger spans residues 3–34 (CPKCGYNKSSVVDSRQAEEGTTIRRRRECEKC). Residues 49 to 139 (LLVIKKDGTR…VYKSFKDVDE (91 aa)) enclose the ATP-cone domain.

This sequence belongs to the NrdR family. The cofactor is Zn(2+).

Its function is as follows. Negatively regulates transcription of bacterial ribonucleotide reductase nrd genes and operons by binding to NrdR-boxes. The protein is Transcriptional repressor NrdR of Streptococcus agalactiae serotype Ia (strain ATCC 27591 / A909 / CDC SS700).